A 424-amino-acid chain; its full sequence is UPF0229 protein YPTS_2141 (424 aa).

A disordered region spans residues 84 to 109; the sequence is TNDRVDRPQGGGGGGSGQGNAGKDGE. Residues 92–105 show a composition bias toward gly residues; that stretch reads QGGGGGGSGQGNAG.

The protein belongs to the UPF0229 family.

In Yersinia pseudotuberculosis serotype IB (strain PB1/+), this protein is UPF0229 protein YPTS_2141.